The chain runs to 117 residues: Basic phospholipase A2 pseudexin A chain (117 aa).

7 cysteine pairs are disulfide-bonded: cysteine 11–cysteine 71, cysteine 27–cysteine 117, cysteine 29–cysteine 45, cysteine 44–cysteine 98, cysteine 51–cysteine 91, cysteine 60–cysteine 84, and cysteine 78–cysteine 89. The Ca(2+) site is built by tyrosine 28, glycine 30, and glycine 32. The active site involves histidine 48. Position 49 (aspartate 49) interacts with Ca(2+). Residue aspartate 92 is part of the active site.

It belongs to the phospholipase A2 family. Group I subfamily. D49 sub-subfamily. Ca(2+) is required as a cofactor. Expressed by the venom gland.

It is found in the secreted. It carries out the reaction a 1,2-diacyl-sn-glycero-3-phosphocholine + H2O = a 1-acyl-sn-glycero-3-phosphocholine + a fatty acid + H(+). Its function is as follows. PLA2 catalyzes the calcium-dependent hydrolysis of the 2-acyl groups in 3-sn-phosphoglycerides. The chain is Basic phospholipase A2 pseudexin A chain from Pseudechis porphyriacus (Red-bellied black snake).